A 346-amino-acid chain; its full sequence is uncharacterized protein (346 aa).

This sequence belongs to the Gfo/Idh/MocA family.

This is an uncharacterized protein from Escherichia coli (strain K12).